A 385-amino-acid chain; its full sequence is 1-deoxy-D-xylulose 5-phosphate reductoisomerase (385 aa).

NADPH contacts are provided by T10, G11, I13, G36, and N38. K123 provides a ligand contact to 1-deoxy-D-xylulose 5-phosphate. E124 is a binding site for NADPH. D148 contributes to the Mn(2+) binding site. Residues S149, E150, S172, and H195 each coordinate 1-deoxy-D-xylulose 5-phosphate. E150 is a Mn(2+) binding site. G201 lines the NADPH pocket. Residues S208, N213, K214, and E217 each coordinate 1-deoxy-D-xylulose 5-phosphate. Mn(2+) is bound at residue E217.

Belongs to the DXR family. The cofactor is Mg(2+). Mn(2+) serves as cofactor.

It catalyses the reaction 2-C-methyl-D-erythritol 4-phosphate + NADP(+) = 1-deoxy-D-xylulose 5-phosphate + NADPH + H(+). It functions in the pathway isoprenoid biosynthesis; isopentenyl diphosphate biosynthesis via DXP pathway; isopentenyl diphosphate from 1-deoxy-D-xylulose 5-phosphate: step 1/6. Its function is as follows. Catalyzes the NADPH-dependent rearrangement and reduction of 1-deoxy-D-xylulose-5-phosphate (DXP) to 2-C-methyl-D-erythritol 4-phosphate (MEP). This is 1-deoxy-D-xylulose 5-phosphate reductoisomerase from Anaplasma phagocytophilum (strain HZ).